A 232-amino-acid chain; its full sequence is uncharacterized protein (232 aa).

Disordered regions lie at residues 123–147 and 169–200; these read VAGG…RKYP and AAAD…PSLR.

It belongs to the mycobacterial PPE family.

This is an uncharacterized protein from Mycobacterium tuberculosis (strain ATCC 25618 / H37Rv).